The primary structure comprises 460 residues: Baeyer-Villiger oxidase AgnL3 (460 aa).

Belongs to the questin oxidase family. It depends on NADPH as a cofactor.

It participates in secondary metabolite biosynthesis. In terms of biological role, baeyer-Villiger oxidase; part of the gene cluster that mediates the biosynthesis of agnestins, dihydroxy-xanthone metabolites. The pathway begins with the assembly and cyclization of atrochrysone thioester by the non-reducing polyketide synthase Agnpks1. The atrochrysone carboxyl ACP thioesterase AgnL7 then breaks the thioester bond and releases the atrochrysone carboxylic acid as the first enzyme-free intermediate. The decarboxylase AgnL1 then catalyzes the concerted decarboxylation-elimination required to convert atochrysone carboxylic acid into emodin anthrone, which is further oxidized to emodin by the anthrone oxygenase AgnL2. Emodin then undergoes reduction catalyzed by the oxidoreductase AgnL4 to yield the dihydroquinone tautomer which is the substrate for reduction by the short chain dehydrogenase AgnL6 reduction to produce hydroxyketone, followed by AgnL8 dehydration and likely spontaneous autoxidation to chrysophanol. Baeyer-Villiger oxidation by the oxidase AgnL3 leads to monodictyphenone via cleavage of the C-10/C-10a bond of chrysophanol. Alternative cleavage at the C-4a/C-10 bond of chrysophanol also leads to the formation some cephalone F. Further conversion to agnestins A and B, requires reduction to dihydro-monodictyphenone, oxidation to agnestin C probably via an epoxide, and rearrangement to either agnestin A or agnestin B directly, although agnestin A or agnestin B can also interconvert. Within the cluster, AgnR1 is the only unassigned oxidoreductase present which could be involved in this conversion. However, AgnR1 seems not to be involved in this step, and thus genes involved in the proposed oxidation/reduction may be located elsewhere on the genome. Further agnestin A derivatives are probably formed by spontaneous decarboxylations, dehydrations and methanolysis reactions. The polypeptide is Baeyer-Villiger oxidase AgnL3 (Paecilomyces divaricatus (Penicillium divaricatum)).